Consider the following 314-residue polypeptide: uncharacterized protein (314 aa).

Residues 1 to 70 (MAGNSQRRGA…QGRHKKTDDT (70 aa)) are disordered. Over residues 43 to 65 (QRPHHPAGKRAAKAARQAQGRHK) the composition is skewed to basic residues. The S-adenosyl-L-methionine site is built by glycine 265, isoleucine 285, and leucine 294.

Belongs to the class IV-like SAM-binding methyltransferase superfamily. RNA methyltransferase TrmH family.

This is an uncharacterized protein from Mycolicibacterium vanbaalenii (strain DSM 7251 / JCM 13017 / BCRC 16820 / KCTC 9966 / NRRL B-24157 / PYR-1) (Mycobacterium vanbaalenii).